A 119-amino-acid polypeptide reads, in one-letter code: MVQENKNFATAQAKSIRVSSRKLNLVAAFIRNMKVSEALVQLTFSPKRIAKVVKDCLQSAVANAENNLGLDIDRLVVTKATVGKALVMKRVMPRAKGRATRINKFFSNLYITVTEKEDN.

It belongs to the universal ribosomal protein uL22 family. In terms of assembly, part of the 50S ribosomal subunit.

Functionally, this protein binds specifically to 23S rRNA; its binding is stimulated by other ribosomal proteins, e.g. L4, L17, and L20. It is important during the early stages of 50S assembly. It makes multiple contacts with different domains of the 23S rRNA in the assembled 50S subunit and ribosome. Its function is as follows. The globular domain of the protein is located near the polypeptide exit tunnel on the outside of the subunit, while an extended beta-hairpin is found that lines the wall of the exit tunnel in the center of the 70S ribosome. This is Large ribosomal subunit protein uL22 from Rickettsia conorii (strain ATCC VR-613 / Malish 7).